The following is a 215-amino-acid chain: UPF0502 protein YceH (215 aa).

Lys80 bears the N6-acetyllysine mark.

This sequence belongs to the UPF0502 family.

The polypeptide is UPF0502 protein YceH (Escherichia coli O157:H7).